Reading from the N-terminus, the 152-residue chain is UPF0311 protein blr7842 (152 aa).

It belongs to the UPF0311 family.

The sequence is that of UPF0311 protein blr7842 from Bradyrhizobium diazoefficiens (strain JCM 10833 / BCRC 13528 / IAM 13628 / NBRC 14792 / USDA 110).